Consider the following 293-residue polypeptide: Glycine--tRNA ligase alpha subunit (293 aa).

This sequence belongs to the class-II aminoacyl-tRNA synthetase family. In terms of assembly, tetramer of two alpha and two beta subunits.

The protein localises to the cytoplasm. The enzyme catalyses tRNA(Gly) + glycine + ATP = glycyl-tRNA(Gly) + AMP + diphosphate. This Wolinella succinogenes (strain ATCC 29543 / DSM 1740 / CCUG 13145 / JCM 31913 / LMG 7466 / NCTC 11488 / FDC 602W) (Vibrio succinogenes) protein is Glycine--tRNA ligase alpha subunit.